We begin with the raw amino-acid sequence, 833 residues long: Transmembrane protease serine 7 (833 aa).

The Cytoplasmic portion of the chain corresponds to 1–62 (MDKEKSDPSC…RAPFWNVQNK (62 aa)). Residues 30 to 49 (KLPGRRLPRKPIGKARPRKQ) form a disordered region. Positions 32–49 (PGRRLPRKPIGKARPRKQ) are enriched in basic residues. A helical; Signal-anchor for type II membrane protein membrane pass occupies residues 63–83 (IILFTVFLFILAVTAWTLLWL). Residues 84–829 (YISKTDSKDA…NFVPWIHKYV (746 aa)) lie on the Extracellular side of the membrane. The SEA domain occupies 92-220 (DAFYFVGMFR…DSVVLNAGLR (129 aa)). Asn-196 carries N-linked (GlcNAc...) asparagine glycosylation. Cystine bridges form between Cys-233–Cys-259, Cys-285–Cys-312, and Cys-355–Cys-386. 2 CUB domains span residues 233–350 (CSQY…FEVI) and 355–471 (CENT…YNIS). N-linked (GlcNAc...) asparagine glycosylation is found at Asn-405 and Asn-469. LDL-receptor class A domains are found at residues 473-509 (PCPAGSFRCSSGLCVPQAQRCDGVNDCFDESDELFCV) and 548-585 (PCTNRTFKCGNDICFRKQNAQCDGIVDCPDRSDEEGCG). Cystine bridges form between Cys-474–Cys-486, Cys-481–Cys-499, Cys-493–Cys-508, Cys-549–Cys-561, Cys-556–Cys-575, Cys-569–Cys-584, and Cys-621–Cys-637. The 235-residue stretch at 596 to 830 (VVGGSDSQEG…FVPWIHKYVP (235 aa)) folds into the Peptidase S1 domain. Residues His-636 and Asp-684 each act as charge relay system in the active site. 3 disulfides stabilise this stretch: Cys-720/Cys-786, Cys-752/Cys-765, and Cys-776/Cys-806. Ser-780 serves as the catalytic Charge relay system.

The protein belongs to the peptidase S1 family. In terms of assembly, forms a heterodimer with SERPINA5. Post-translationally, N-glycosylated.

Its subcellular location is the cell membrane. Functionally, serine protease which preferentially hydrolyzes peptides with Arg at the P1 position. The polypeptide is Transmembrane protease serine 7 (Rattus norvegicus (Rat)).